The following is a 500-amino-acid chain: NAD(P)H-quinone oxidoreductase chain 4, chloroplastic (500 aa).

A run of 14 helical transmembrane segments spans residues 4–24 (FPWLTIIVVFPIFAGSLIFFL), 35–55 (YTICICILELLLTTYAFCYHF), 87–107 (IGPILLTGFITTLATLAAWPV), 113–130 (LFHFLMLAMYSGQIGSFS), 134–154 (LLLFFIMWELELIPVYLLLCM), 167–187 (FILYTAGGSVFLLMGVLGLAL), 208–228 (VLEIIFYIGFFIAFAVKSPII), 242–262 (HYSTCMLLAGILLKMGAYGLI), 274–294 (SIFSPWLMIIGTIQIIYAALT), 305–325 (IAYSSVSHMGFIIIGISSLTD), 330–350 (GALLQIISHGFIGAALFFLAG), 386–406 (LALPGMSGFVAELIVFFGIIT), 411–431 (LLIPKILITFVMAIGMILTPI), and 462–482 (LFLSISIFLPVIGIGIYPDFV).

The protein belongs to the complex I subunit 4 family.

It localises to the plastid. It is found in the chloroplast thylakoid membrane. It carries out the reaction a plastoquinone + NADH + (n+1) H(+)(in) = a plastoquinol + NAD(+) + n H(+)(out). It catalyses the reaction a plastoquinone + NADPH + (n+1) H(+)(in) = a plastoquinol + NADP(+) + n H(+)(out). The chain is NAD(P)H-quinone oxidoreductase chain 4, chloroplastic (ndhD) from Nicotiana tabacum (Common tobacco).